The following is a 595-amino-acid chain: MTMTLHTKASGMALLHQIQGNELETLNRPQLKIPLERPLGEVYVDGSKPAVYNYPEGAAYDFNAAAAASAPVYGQSGLAYGSGSEAAAFGANGLGGFPPLNSVSPSPLVLLHPPPQLSPFLHPHGQQVPYYLENEPSGYAVREAGPPAFYRPTSDNRRQSGRERLASTGDKGSMAMESAKETRYCAVCNDYASGYHYGVWSCEGCKAFFKRSIQGHNDYMCPATNQCTIDKNRRKSCQACRLRKCYEVGMMKGGIRKDRRGGRMLKHKRQRDEGEGRNEVGSSGDVRASNLWPSPLLIKHTKKNSPALSLTADQMVSALLEAEPPIIYSDYDPSRPFSEASMMGLLTNLADRELVHMINWAKRVPGFVDLSLHDQVHLLECAWLEILMIGLVWRSMEHPGKLLFAPNLLLDRNQGKCVEGMVEIFDMLLATSSRFRMMNLQGEEFVCLKSIILLNSGVYTFLSSTLKSLEEKDHIHRVLDKITDTLIHLMAKAGLSLQQQHRRLAQLLLILSHIRHMSNKGMEHLYNMKCKNVVPLYDLLLEMLDAHRLHAPANRGGAPMEEMNQSQLATTGSTSAHSLQAYYITEEAGAFPTTV.

Residues 1–184 (MTMTLHTKAS…AMESAKETRY (184 aa)) are modulating (transactivation AF-1); mediates interaction with MACROD1. O-linked (GlcNAc) serine glycosylation occurs at S10. The required for interaction with NCOA1 stretch occupies residues 35-47 (LERPLGEVYVDGS). The interaction with DDX5; self-association stretch occupies residues 35–174 (LERPLGEVYV…LASTGDKGSM (140 aa)). Residues S104 and S106 each carry the phosphoserine; by CDK2 modification. A Phosphoserine modification is found at S118. The interval 149-173 (FYRPTSDNRRQSGRERLASTGDKGS) is disordered. Positions 154–165 (SDNRRQSGRERL) are enriched in basic and acidic residues. S167 carries the post-translational modification Phosphoserine; by CK2. 2 NR C4-type zinc fingers span residues 185–205 (CAVCNDYASGYHYGVWSCEGC) and 221–245 (CPATNQCTIDKNRRKSCQACRLRKC). A DNA-binding region (nuclear receptor) is located at residues 185-250 (CAVCNDYASG…RLRKCYEVGM (66 aa)). A mediates interaction with DNTTIP2 region spans residues 185 to 310 (CAVCNDYASG…TKKNSPALSL (126 aa)). A hinge region spans residues 251–310 (MKGGIRKDRRGGRMLKHKRQRDEGEGRNEVGSSGDVRASNLWPSPLLIKHTKKNSPALSL). Over residues 257-269 (KDRRGGRMLKHKR) the composition is skewed to basic residues. A disordered region spans residues 257 to 287 (KDRRGGRMLKHKRQRDEGEGRNEVGSSGDVR). An Asymmetric dimethylarginine; by PRMT1 modification is found at R260. The interval 262–595 (GRMLKHKRQR…EEAGAFPTTV (334 aa)) is interaction with AKAP13. Residues 264–595 (MLKHKRQRDE…EEAGAFPTTV (332 aa)) are self-association. The region spanning 311–547 (TADQMVSALL…DLLLEMLDAH (237 aa)) is the NR LBD domain. Residues 311-595 (TADQMVSALL…EEAGAFPTTV (285 aa)) form a transactivation AF-2 region. 17beta-estradiol contacts are provided by E353 and R394. C447 carries S-palmitoyl cysteine lipidation. Residue H524 coordinates 17beta-estradiol. A Phosphotyrosine; by Tyr-kinases modification is found at Y537. O-linked (GlcNAc) threonine glycosylation is present at T571.

It belongs to the nuclear hormone receptor family. NR3 subfamily. Binds DNA as a homodimer. Can form a heterodimer with ESR2. Interacts with coactivator NCOA5. Interacts with PELP1, the interaction is enhanced by 17-beta-estradiol; the interaction increases ESR1 transcriptional activity. Interacts with NCOA7; the interaction is ligand-inducible. Interacts with AKAP13, CUEDC2, HEXIM1, KDM5A, MAP1S, SMARD1, and UBE1C. Interacts with MUC1; the interaction is stimulated by 7 beta-estradiol (E2) and enhances ESR1-mediated transcription. Interacts with DNTTIP2, and UIMC1. Interacts with KMT2D/MLL2. Interacts with ATAD2; the interaction is enhanced by estradiol. Interacts with KIF18A and LDB1. Interacts with RLIM (via its C-terminus). Interacts with MACROD1. Interacts with SH2D4A and PLCG. Interacts with SH2D4A; the interaction blocks binding to PLCG and inhibits estrogen-induced cell proliferation. Interacts with DYNLL1. Interacts with CCDC62; the interaction requires estradiol and appears to enhance the transcription of target genes. Interacts with NR2C1; the interaction prevents homodimerization of ESR1 and suppresses its transcriptional activity and cell growth. Interacts with DNAAF4. Interacts with PRMT2. Interacts with RBFOX2. Interacts with EP300; the interaction is estrogen-dependent and enhanced by CITED1. Interacts with CITED1; the interaction is estrogen-dependent. Interacts with FAM120B, FOXL2, PHB2 and SLC30A9. Interacts with coactivators NCOA3 and NCOA6. Interacts with STK3/MST2 only in the presence of SAV1 and vice-versa. Binds to CSNK1D. Interacts with NCOA2; NCOA2 can interact with ESR1 AF-1 and AF-2 domains simultaneously and mediate their transcriptional synergy. Interacts with DDX5. Interacts with NCOA1; the interaction seems to require a self-association of N-terminal and C-terminal regions. Interacts with ZNF366, DDX17, NFKB1, RELA, SP1 and SP3. Interacts with NRIP1. Interacts with GPER1; the interaction occurs in an estrogen-dependent manner. Interacts with CLOCK and the interaction is stimulated by estrogen. Interacts with TRIP4 (ufmylated); estrogen dependent. Interacts with LMTK3; the interaction phosphorylates ESR1 (in vitro) and protects it against proteasomal degradation. Interacts with CCAR2 (via N-terminus) in a ligand-independent manner. Interacts with ZFHX3. Interacts with SFR1 in a ligand-dependent and -independent manner. Interacts with DCAF13, LATS1 and DCAF1; regulates ESR1 ubiquitination and ubiquitin-mediated proteasomal degradation. Interacts (via DNA-binding domain) with POU4F2 (C-terminus); this interaction increases the estrogen receptor ESR1 transcriptional activity in a DNA- and ligand 17-beta-estradiol-independent manner. Interacts with ESRRB isoform 1. Interacts with UBE3A and WBP2. Interacts with GTF2B. Interacts with RBM39. In the absence of hormonal ligand, interacts with TACC1. Interacts with PI3KR1 or PI3KR2 and PTK2/FAK1. Interacts with SRC. Interacts with BAG1; the interaction is promoted in the absence of estradiol (17-beta-estradiol/E2). Interacts with and ubiquitinated by STUB1; the interaction is promoted in the absence of estradiol (17-beta-estradiol/E2). Interacts with NEDD8. Ubiquitinated; regulated by LATS1 via DCAF1 it leads to ESR1 proteasomal degradation. Deubiquitinated by OTUB1. Ubiquitinated by STUB1/CHIP; in the CA1 hippocampal region following loss of endogenous circulating estradiol (17-beta-estradiol/E2). Ubiquitinated by UBR5, leading to its degradation: UBR5 specifically recognizes and binds ligand-bound ESR1 when it is not associated with coactivators (NCOAs). In presence of NCOAs, the UBR5-degron is not accessible, preventing its ubiquitination and degradation. In terms of processing, phosphorylated by cyclin A/CDK2 and CK1. Phosphorylation probably enhances transcriptional activity. Dephosphorylation at Ser-118 by PPP5C inhibits its transactivation activity. Phosphorylated by LMTK3 (in vitro). Post-translationally, palmitoylated at Cys-447 by ZDHHC7 and ZDHHC21. Palmitoylation is required for plasma membrane targeting and for rapid intracellular signaling via ERK and AKT kinases and cAMP generation, but not for signaling mediated by the nuclear hormone receptor. Dimethylated by PRMT1 at Arg-260. The methylation may favor cytoplasmic localization. Demethylated by JMJD6 at Arg-260.

It localises to the nucleus. Its subcellular location is the cytoplasm. It is found in the golgi apparatus. The protein localises to the cell membrane. Functionally, nuclear hormone receptor. The steroid hormones and their receptors are involved in the regulation of eukaryotic gene expression and affect cellular proliferation and differentiation in target tissues. Ligand-dependent nuclear transactivation involves either direct homodimer binding to a palindromic estrogen response element (ERE) sequence or association with other DNA-binding transcription factors, such as AP-1/c-Jun, c-Fos, ATF-2, Sp1 and Sp3, to mediate ERE-independent signaling. Ligand binding induces a conformational change allowing subsequent or combinatorial association with multiprotein coactivator complexes through LXXLL motifs of their respective components. Mutual transrepression occurs between the estrogen receptor (ER) and NF-kappa-B in a cell-type specific manner. Decreases NF-kappa-B DNA-binding activity and inhibits NF-kappa-B-mediated transcription from the IL6 promoter and displace RELA/p65 and associated coregulators from the promoter. Recruited to the NF-kappa-B response element of the CCL2 and IL8 promoters and can displace CREBBP. Present with NF-kappa-B components RELA/p65 and NFKB1/p50 on ERE sequences. Can also act synergistically with NF-kappa-B to activate transcription involving respective recruitment adjacent response elements; the function involves CREBBP. Can activate the transcriptional activity of TFF1. Also mediates membrane-initiated estrogen signaling involving various kinase cascades. Essential for MTA1-mediated transcriptional regulation of BRCA1 and BCAS3. Maintains neuronal survival in response to ischemic reperfusion injury when in the presence of circulating estradiol (17-beta-estradiol/E2). This chain is Estrogen receptor (ESR1), found in Felis catus (Cat).